Consider the following 236-residue polypeptide: MQVQDDGVNLIPFAKCSRVVSRSPPPRLPSQSLRPMPQRYGDVFWKNLNQRPTPTWLEEQHIPPMLRATGCSQLGLYPPEQLPPPEMLWRRKKRRPCLEGMQQQGLGGVPARVRAVTYHLEDLRRRQSIINELKKAQWGSSGAASEPVVLGEEGCGFPSTNEYPDLEEERATYPQEEDRFLTPGRAQLLWSPWSPLDQEEACASRQLHSLASFSTVTARRNPLHNPWGMELAASEE.

Residue Ser-23 is modified to Phosphoserine. The interval 75–99 (GLYPPEQLPPPEMLWRRKKRRPCLE) is interaction with CCNA1 and CCNA1/CDK2 complex; essential for CDK2 inhibitory activity. The Nuclear localization signal signature appears at 90–95 (RRKKRR). A Phosphothreonine modification is found at Thr-182. Ser-191 and Ser-194 each carry phosphoserine.

This sequence belongs to the INCA family. As to quaternary structure, interacts with CCNA1. Interacts with CCNA2, CCNB1 and CCNE1. Found in a complex with CCNA1 and CDK2. Interacts with ZNF16; the interaction inhibits INCA1 activity and induces the cell cycle process. Interacts with SPACA9. Interacts with the CCNA1/CDK2 complex. Interacts with ING5, DAZAP2, RNF26, USP15, SPOUT1, DPH7, TRIM26 and RAB5C. Phosphorylated when part of a complex with CCNA1 and CDK2. Strongly phosphorylated by CDK2 on its C-terminal region spanning amino acid 149-221. Less intensively phosphorylated by CDK2 on its first 75 amino acid residues. As to expression, detected in testis, and at lower levels in ovary. Detected at very low levels in testis tumors. Down-regulated in bone marrow cells in acute myeloid and lymphoid leukemia patients as compared with normal bone marrow cells.

The protein resides in the nucleus. It is found in the cytoplasm. In terms of biological role, binds to CDK2-bound cyclins and inhibits the kinase activity of CDK2; binding to cyclins is critical for its function as CDK inhibitor. Inhibits cell growth and cell proliferation and may play a role in cell cycle control. Required for ING5-mediated regulation of S-phase progression, enhancement of Fas-induced apoptosis and inhibition of cell growth. This Homo sapiens (Human) protein is Protein INCA1 (INCA1).